The primary structure comprises 548 residues: 4-coumarate--CoA ligase CCL1 (548 aa).

ATP contacts are provided by residues 195–203, 337–342, Asp426, 438–441, and Lys532; these read SSGTTGLPK, QGYGMT, and IVDR. Residues 268 to 337 are SBD1; the sequence is EISKLLELIE…EKLPHAKLGQ (70 aa). The SBD2 stretch occupies residues 338-405; sequence GYGMTEAGPV…IRGKQIMKGY (68 aa).

Belongs to the ATP-dependent AMP-binding enzyme family. As to expression, mostly expressed in glandular trichomes (lupulin glands) after flowering, and, to a lower extent, in stems, leaves, cones and flowers.

The protein localises to the cytoplasm. It carries out the reaction (E)-4-coumarate + ATP + CoA = (E)-4-coumaroyl-CoA + AMP + diphosphate. It participates in secondary metabolite biosynthesis. Functionally, involved in the biosynthesis of prenylated phenolics natural products which contribute to the bitter taste of beer and display broad biological activities. Catalyzes the ligation of CoA on (E)-4-coumarate to produce (E)-4-coumaroyl-CoA. The protein is 4-coumarate--CoA ligase CCL1 of Humulus lupulus (European hop).